The following is a 35-amino-acid chain: MEALVYTFLLVSTLGIIFFAIFFREPPKVPDRGSK.

A helical transmembrane segment spans residues 3–23 (ALVYTFLLVSTLGIIFFAIFF).

Belongs to the PsbT family. As to quaternary structure, PSII is composed of 1 copy each of membrane proteins PsbA, PsbB, PsbC, PsbD, PsbE, PsbF, PsbH, PsbI, PsbJ, PsbK, PsbL, PsbM, PsbT, PsbY, PsbZ, Psb30/Ycf12, at least 3 peripheral proteins of the oxygen-evolving complex and a large number of cofactors. It forms dimeric complexes.

It localises to the plastid. The protein resides in the chloroplast thylakoid membrane. Its function is as follows. Found at the monomer-monomer interface of the photosystem II (PS II) dimer, plays a role in assembly and dimerization of PSII. PSII is a light-driven water plastoquinone oxidoreductase, using light energy to abstract electrons from H(2)O, generating a proton gradient subsequently used for ATP formation. The chain is Photosystem II reaction center protein T from Stangeria eriopus (Natal grass cycad).